The following is a 132-amino-acid chain: Movement protein TGB3 (132 aa).

Residues 1–11 (MVLVVKVDLSN) are Cytoplasmic-facing. A helical transmembrane segment spans residues 12–32 (IVLYIVAGCVVVSMLYSPFFS). The Lumenal segment spans residues 33-109 (NDVKASSYAG…TETLFIILSR (77 aa)). Residues 110–130 (LFGLAVFLFMICLMSIVWFWC) traverse the membrane as a helical segment. Residues 131 to 132 (HR) lie on the Cytoplasmic side of the membrane.

This sequence belongs to the benyvirus TGB3 movement protein family. Interacts with movement proteins TGB1 and TGB2.

The protein localises to the host cell junction. It localises to the host plasmodesma. It is found in the host endoplasmic reticulum membrane. Its function is as follows. Participates in the transport of viral RNA to the plasmodesmata. TGBp3 most probably contains signals of plasmodesmata targeting is therefore involved in the targeting of TGBp2, and viral RNAs-TGBp1 (RNP complex), to plasmodesmata. Can gate plasmodesmata and increase their size exclusion limit. The chain is Movement protein TGB3 from Beta macrocarpa (Beet).